A 382-amino-acid polypeptide reads, in one-letter code: UDP-4-amino-4-deoxy-L-arabinose--oxoglutarate aminotransferase (382 aa).

Position 183 is an N6-(pyridoxal phosphate)lysine (Lys183).

It belongs to the DegT/DnrJ/EryC1 family. ArnB subfamily. Homodimer. The cofactor is pyridoxal 5'-phosphate.

The enzyme catalyses UDP-4-amino-4-deoxy-beta-L-arabinose + 2-oxoglutarate = UDP-beta-L-threo-pentopyranos-4-ulose + L-glutamate. It functions in the pathway nucleotide-sugar biosynthesis; UDP-4-deoxy-4-formamido-beta-L-arabinose biosynthesis; UDP-4-deoxy-4-formamido-beta-L-arabinose from UDP-alpha-D-glucuronate: step 2/3. The protein operates within bacterial outer membrane biogenesis; lipopolysaccharide biosynthesis. In terms of biological role, catalyzes the conversion of UDP-4-keto-arabinose (UDP-Ara4O) to UDP-4-amino-4-deoxy-L-arabinose (UDP-L-Ara4N). The modified arabinose is attached to lipid A and is required for resistance to polymyxin and cationic antimicrobial peptides. In Pseudomonas aeruginosa (strain ATCC 15692 / DSM 22644 / CIP 104116 / JCM 14847 / LMG 12228 / 1C / PRS 101 / PAO1), this protein is UDP-4-amino-4-deoxy-L-arabinose--oxoglutarate aminotransferase.